A 481-amino-acid chain; its full sequence is uncharacterized protein (481 aa).

Basic residues predominate over residues 1–18 (MSRLPSKTKYHSSHRSLN). The segment at 1-37 (MSRLPSKTKYHSSHRSLNRKTPLLQRSSETNSLRESG) is disordered. Residues 24 to 34 (LQRSSETNSLR) are compositionally biased toward polar residues. 2 helical membrane-spanning segments follow: residues 172–191 (SIST…AGAI) and 195–214 (AAAG…YLCW).

It localises to the membrane. This is an uncharacterized protein from Coxiella burnetii (strain RSA 493 / Nine Mile phase I).